Reading from the N-terminus, the 57-residue chain is Large ribosomal subunit protein eL20 (57 aa).

This sequence belongs to the eukaryotic ribosomal protein eL20 family. Part of the 50S ribosomal subunit. Binds 23S rRNA.

The chain is Large ribosomal subunit protein eL20 from Halorhabdus utahensis (strain DSM 12940 / JCM 11049 / AX-2).